The following is a 163-amino-acid chain: MFHVEKQSGDKEKDYQLLLKQLEAMTEDETDQIANYANASALLYHSLPEVNWAGFYFAKEEDGQLVLGPFQGLPACVRIPFGRGVCGTAYANGKVERIEDVNAFPGHIACDAASQSEIVLPIRVDGKIVGVLDIDSPVKNRFDEIDEKYLTQFAETLEKALAQ.

Belongs to the free Met sulfoxide reductase family.

This is Protein YtsP (ytsP) from Bacillus subtilis (strain 168).